The chain runs to 479 residues: ATP synthase subunit beta (479 aa).

ATP is bound at residue 153 to 160; that stretch reads GGAGVGKT.

It belongs to the ATPase alpha/beta chains family. F-type ATPases have 2 components, CF(1) - the catalytic core - and CF(0) - the membrane proton channel. CF(1) has five subunits: alpha(3), beta(3), gamma(1), delta(1), epsilon(1). CF(0) has three main subunits: a(1), b(2) and c(9-12). The alpha and beta chains form an alternating ring which encloses part of the gamma chain. CF(1) is attached to CF(0) by a central stalk formed by the gamma and epsilon chains, while a peripheral stalk is formed by the delta and b chains.

It is found in the cell membrane. The enzyme catalyses ATP + H2O + 4 H(+)(in) = ADP + phosphate + 5 H(+)(out). Functionally, produces ATP from ADP in the presence of a proton gradient across the membrane. The catalytic sites are hosted primarily by the beta subunits. The polypeptide is ATP synthase subunit beta (Lactobacillus delbrueckii subsp. bulgaricus (strain ATCC 11842 / DSM 20081 / BCRC 10696 / JCM 1002 / NBRC 13953 / NCIMB 11778 / NCTC 12712 / WDCM 00102 / Lb 14)).